A 214-amino-acid polypeptide reads, in one-letter code: MKLIKICVLKNSIFRDTFYSLFDIIYPRSENSLIFANQLRRILLGKSEGLRFLKISGFIANKNSKFSVYQKINEFSEFEEINESVFQLFLNIKNIDLYYRSCDANKRFFGTLEAYYPKTYSQDDIILSKNIKLIKKNQHIFSLSSLKLKMKFILEAKKGIGSFFTPVKRVNYIIEENKLSFSRVVLELETDKRRGCFSSTIDAFKVLNFFALNM.

It belongs to the RNA polymerase alpha chain family. In plastids the minimal PEP RNA polymerase catalytic core is composed of four subunits: alpha, beta, beta', and beta''. When a (nuclear-encoded) sigma factor is associated with the core the holoenzyme is formed, which can initiate transcription.

The protein resides in the plastid. It localises to the chloroplast. It carries out the reaction RNA(n) + a ribonucleoside 5'-triphosphate = RNA(n+1) + diphosphate. In terms of biological role, DNA-dependent RNA polymerase catalyzes the transcription of DNA into RNA using the four ribonucleoside triphosphates as substrates. This Euglena viridis (Cercaria viridis) protein is DNA-directed RNA polymerase subunit alpha (rpoA).